The sequence spans 305 residues: Oxygen-dependent coproporphyrinogen-III oxidase (305 aa).

S93 lines the substrate pocket. A divalent metal cation-binding residues include H97 and H107. The Proton donor role is filled by H107. 109–111 (NVR) is a substrate binding site. A divalent metal cation-binding residues include H146 and H176. The tract at residues 241 to 276 (YVEFNLVFDRGTLFGLQSGGRTESILMSLPPQVRWG) is important for dimerization. Position 259 to 261 (259 to 261 (GGR)) interacts with substrate.

The protein belongs to the aerobic coproporphyrinogen-III oxidase family. As to quaternary structure, homodimer. The cofactor is a divalent metal cation.

It localises to the cytoplasm. It carries out the reaction coproporphyrinogen III + O2 + 2 H(+) = protoporphyrinogen IX + 2 CO2 + 2 H2O. It functions in the pathway porphyrin-containing compound metabolism; protoporphyrin-IX biosynthesis; protoporphyrinogen-IX from coproporphyrinogen-III (O2 route): step 1/1. Functionally, involved in the heme biosynthesis. Catalyzes the aerobic oxidative decarboxylation of propionate groups of rings A and B of coproporphyrinogen-III to yield the vinyl groups in protoporphyrinogen-IX. This Pseudomonas aeruginosa (strain UCBPP-PA14) protein is Oxygen-dependent coproporphyrinogen-III oxidase.